A 322-amino-acid chain; its full sequence is ATP-dependent 6-phosphofructokinase (322 aa).

Gly13 is an ATP binding site. 23 to 27 (RAVVR) contacts ADP. ATP contacts are provided by residues 74–75 (RC) and 104–107 (GDGS). Asp105 contacts Mg(2+). 127 to 129 (TID) is a binding site for substrate. Catalysis depends on Asp129, which acts as the Proton acceptor. Residue Arg156 coordinates ADP. Substrate is bound by residues Arg164 and 171 to 173 (MGR). Residues 187–189 (GAE) and 215–217 (KRH) each bind ADP. Residues Glu224, Arg246, and 252–255 (HIQR) each bind substrate.

This sequence belongs to the phosphofructokinase type A (PFKA) family. ATP-dependent PFK group I subfamily. Prokaryotic clade 'B1' sub-subfamily. Homotetramer. Mg(2+) is required as a cofactor.

It is found in the cytoplasm. The catalysed reaction is beta-D-fructose 6-phosphate + ATP = beta-D-fructose 1,6-bisphosphate + ADP + H(+). It participates in carbohydrate degradation; glycolysis; D-glyceraldehyde 3-phosphate and glycerone phosphate from D-glucose: step 3/4. Allosterically activated by ADP and other diphosphonucleosides, and allosterically inhibited by phosphoenolpyruvate. Catalyzes the phosphorylation of D-fructose 6-phosphate to fructose 1,6-bisphosphate by ATP, the first committing step of glycolysis. This chain is ATP-dependent 6-phosphofructokinase, found in Paenibacillus macquariensis (Bacillus macquariensis).